A 435-amino-acid chain; its full sequence is Histidine--tRNA ligase (435 aa).

The protein belongs to the class-II aminoacyl-tRNA synthetase family. Homodimer.

Its subcellular location is the cytoplasm. The catalysed reaction is tRNA(His) + L-histidine + ATP = L-histidyl-tRNA(His) + AMP + diphosphate + H(+). The polypeptide is Histidine--tRNA ligase (Synechococcus elongatus (strain ATCC 33912 / PCC 7942 / FACHB-805) (Anacystis nidulans R2)).